Reading from the N-terminus, the 347-residue chain is Cytoplasmic tRNA 2-thiolation protein 1 (347 aa).

Ser-200 carries the phosphoserine modification. The disordered stretch occupies residues 315–347 (LAIGKGRRGLDEEGPPREPQPSRPLTSEPVPDF).

Belongs to the TtcA family. CTU1/NCS6/ATPBD3 subfamily. In terms of assembly, component of a complex at least composed of URM1, CTU2/NCS2 and CTU1/ATPBD3. May form a heterodimer with CTU2/NCS2.

It is found in the cytoplasm. The protein operates within tRNA modification; 5-methoxycarbonylmethyl-2-thiouridine-tRNA biosynthesis. In terms of biological role, plays a central role in 2-thiolation of mcm(5)S(2)U at tRNA wobble positions of tRNA(Lys), tRNA(Glu) and tRNA(Gln). Directly binds tRNAs and probably acts by catalyzing adenylation of tRNAs, an intermediate required for 2-thiolation. It is unclear whether it acts as a sulfurtransferase that transfers sulfur from thiocarboxylated URM1 onto the uridine of tRNAs at wobble position. This Bos taurus (Bovine) protein is Cytoplasmic tRNA 2-thiolation protein 1.